Here is a 203-residue protein sequence, read N- to C-terminus: Glutathione-specific gamma-glutamylcyclotransferase (203 aa).

12-17 (VFGYGS) serves as a coordination point for substrate. Glu-105 functions as the Proton acceptor in the catalytic mechanism.

This sequence belongs to the gamma-glutamylcyclotransferase family. ChaC subfamily.

The protein localises to the cytoplasm. The protein resides in the nucleus. The catalysed reaction is glutathione = L-cysteinylglycine + 5-oxo-L-proline. Its function is as follows. Gamma-glutamylcyclotransferase acting specifically on glutathione, but not on other gamma-glutamyl peptides. Allows utilization of gluthathione through subsequent cleavage of the Cys-Gly dipeptide by Cys-Gly metallodipeptidase dug1. This is Glutathione-specific gamma-glutamylcyclotransferase from Schizosaccharomyces pombe (strain 972 / ATCC 24843) (Fission yeast).